Reading from the N-terminus, the 414-residue chain is Esterase FrsA (414 aa).

Belongs to the FrsA family.

The catalysed reaction is a carboxylic ester + H2O = an alcohol + a carboxylate + H(+). In terms of biological role, catalyzes the hydrolysis of esters. The chain is Esterase FrsA from Shigella dysenteriae serotype 1 (strain Sd197).